The sequence spans 152 residues: Transcription factor ATOH7 (152 aa).

One can recognise a bHLH domain in the interval 40-92 (RRRLAANARERRRMQGLNTAFDRLRRVVPQWGQDKKLSKYETLQMALSYIMAL).

In terms of assembly, forms a heterodimer with TCF3 isoform E47; interaction may be required for DNA-binding in certain situations.

The protein localises to the nucleus. It is found in the perikaryon. The protein resides in the cell projection. It localises to the axon. Transcription factor that binds to DNA at the consensus sequence 5'-CAG[GC]TG-3'. Dimerization with TCF3 isoform E47 may be required in certain situations. Binds to gene promoters and enhancer elements, and thereby regulates a transcriptional program of retinal ganglion cell (RGC) determinant genes. Although the exact mechanism is not certain, retinal transcription regulation by ATOH7 has a role in RGC determination and survival, photoreceptor population development, targeting of RGC axons to the optic nerve and development of the retino-hypothalamic tract. Binds to its own promoter and enhancer sequences, suggesting autoregulation of ATOH7 transcription. Required for retinal circadian rhythm photoentrainment. Plays a role in brainstem auditory signaling and binaural processing. This chain is Transcription factor ATOH7, found in Homo sapiens (Human).